A 274-amino-acid chain; its full sequence is MDLLLLLKAAIMGIVEGITEFLPISSTGHLILASELMNFWTKEKSAVFVVAIQMGAIAAVIYEYWSRLWGAATGMVTGEEKGRHLAISLILASIPIVLVGLSFGQTVKDLLFNDVAVAIGLIVGGVIIMWIEKNPPKVNAVEVENIGLKQAIWIGLIQVLSLIPGTSRSGATIIGAMFLGVSRKAATEFSFFLGIPVIIGAGLLDLYQSHEVLQTSFDWSVLGVGILVSFVSALLLIRALVAYVAKRDFMVFAWYRIVSGLLILLFAYTGWTIW.

A run of 8 helical transmembrane segments spans residues Leu-4 to Ile-24, Ser-45 to Trp-65, His-84 to Gly-104, Leu-111 to Ile-131, Ile-146 to Thr-166, Ala-186 to Leu-206, Phe-217 to Ile-237, and Phe-249 to Thr-269.

This sequence belongs to the UppP family.

It localises to the cell inner membrane. The catalysed reaction is di-trans,octa-cis-undecaprenyl diphosphate + H2O = di-trans,octa-cis-undecaprenyl phosphate + phosphate + H(+). Catalyzes the dephosphorylation of undecaprenyl diphosphate (UPP). Confers resistance to bacitracin. The protein is Undecaprenyl-diphosphatase 1 of Acinetobacter baylyi (strain ATCC 33305 / BD413 / ADP1).